We begin with the raw amino-acid sequence, 842 residues long: G-type lectin S-receptor-like serine/threonine-protein kinase At1g11330 (842 aa).

Positions M1–G29 are cleaved as a signal peptide. At E30–N444 the chain is on the extracellular side. The region spanning R32–S157 is the Bulb-type lectin domain. N-linked (GlcNAc...) asparagine glycans are attached at residues N63, N94, N122, N130, N196, and N260. The EGF-like; atypical domain maps to P294–T330. Cystine bridges form between C298/C310 and C304/C318. Residues N328, N336, N354, and N396 are each glycosylated (N-linked (GlcNAc...) asparagine). The region spanning C349 to A435 is the PAN domain. Intrachain disulfides connect C389–C410 and C393–C399. Residues L445 to L465 form a helical membrane-spanning segment. The Cytoplasmic portion of the chain corresponds to L466–R842. The Protein kinase domain maps to F524–F810. Residues L530 to V538 and K552 each bind ATP. Phosphoserine is present on residues S558 and S573. The caM-binding stretch occupies residues M613–I630. D649 serves as the catalytic Proton acceptor. A phosphoserine mark is found at S653 and S666. T683 bears the Phosphothreonine mark. A phosphoserine mark is found at S726, S727, S821, and S830. Positions R814 to R842 are disordered. Low complexity predominate over residues E818–Q827. Polar residues predominate over residues K828–R842. T837 is subject to Phosphothreonine.

It belongs to the protein kinase superfamily. Ser/Thr protein kinase family.

The protein localises to the cell membrane. The catalysed reaction is L-seryl-[protein] + ATP = O-phospho-L-seryl-[protein] + ADP + H(+). The enzyme catalyses L-threonyl-[protein] + ATP = O-phospho-L-threonyl-[protein] + ADP + H(+). The polypeptide is G-type lectin S-receptor-like serine/threonine-protein kinase At1g11330 (Arabidopsis thaliana (Mouse-ear cress)).